We begin with the raw amino-acid sequence, 846 residues long: uncharacterized protein (846 aa).

Disordered regions lie at residues 159–217 (VPTF…INHI), 254–276 (CNLN…SNSN), 332–414 (NKLN…PLSI), 459–501 (GSSI…SNSL), 556–651 (QQQQ…NFND), and 803–846 (TTTT…NKNK). A compositionally biased stretch (low complexity) spans 163–217 (HNQNQNNNNQNNNQNNNNNNNNNNNNNNNNNNNNNNNSQNNNNNQNNNNNHINHI). The span at 355–414 (LQSPNSQSLANSSANISSNALNQSSSSQQQQPQSTSQQQQQQHKMNSSSGNISPPLPLSI) shows a compositional bias: low complexity. Residues 459–482 (GSSITPKNLSPLSSSAPNTPKQFA) are compositionally biased toward polar residues. Composition is skewed to low complexity over residues 483–501 (SLSS…SNSL), 568–642 (QQQQ…QPNN), and 811–846 (NNNN…NKNK).

This is an uncharacterized protein from Dictyostelium discoideum (Social amoeba).